Consider the following 374-residue polypeptide: Glutamate 5-kinase (374 aa).

Residue Lys-16 coordinates ATP. Substrate is bound by residues Ser-56, Asp-143, and Asn-155. ATP is bound at residue 175–176 (TD). Residues 282–360 (RGRVVLDAGA…SEIEAVLGYV (79 aa)) enclose the PUA domain.

Belongs to the glutamate 5-kinase family.

Its subcellular location is the cytoplasm. The catalysed reaction is L-glutamate + ATP = L-glutamyl 5-phosphate + ADP. It participates in amino-acid biosynthesis; L-proline biosynthesis; L-glutamate 5-semialdehyde from L-glutamate: step 1/2. Its function is as follows. Catalyzes the transfer of a phosphate group to glutamate to form L-glutamate 5-phosphate. This is Glutamate 5-kinase from Ralstonia pickettii (strain 12J).